The primary structure comprises 87 residues: RNA-binding protein Hfq (87 aa).

The 60-residue stretch at 9-68 (DPFLNALRRERIPVSIYLVNGIKLQGQIESFDQFVILLKNTVSQMVYKHAISTVVPARAV) folds into the Sm domain.

This sequence belongs to the Hfq family. In terms of assembly, homohexamer.

Its function is as follows. RNA chaperone that binds small regulatory RNA (sRNAs) and mRNAs to facilitate mRNA translational regulation in response to envelope stress, environmental stress and changes in metabolite concentrations. Also binds with high specificity to tRNAs. The sequence is that of RNA-binding protein Hfq from Aeromonas hydrophila subsp. hydrophila (strain ATCC 7966 / DSM 30187 / BCRC 13018 / CCUG 14551 / JCM 1027 / KCTC 2358 / NCIMB 9240 / NCTC 8049).